A 561-amino-acid polypeptide reads, in one-letter code: Trehalose-6-phosphate hydrolase (561 aa).

Catalysis depends on Asp203, which acts as the Nucleophile. The active-site Proton donor is Glu254.

The protein belongs to the glycosyl hydrolase 13 family.

It localises to the cytoplasm. It carries out the reaction alpha,alpha-trehalose 6-phosphate + H2O = D-glucose 6-phosphate + D-glucose. Its activity is regulated as follows. Activity is stimulated by high salt concentrations with different efficiencies depending on the kind of salt. In vitro, inhibited by glucose. Its function is as follows. Hydrolyzes trehalose-6-phosphate to glucose and glucose 6-phosphate. Can also very effectively hydrolyze p-nitrophenyl-alpha-D-glucopyranoside, but not lactose, maltose, sucrose or sucrose-6-phosphate. Trehalose is also hydrolyzed, but to a much smaller extent than trehalose-6-phosphate. The sequence is that of Trehalose-6-phosphate hydrolase from Bacillus subtilis (strain 168).